We begin with the raw amino-acid sequence, 153 residues long: Pheromone-binding protein Gp-9 (153 aa).

The N-terminal stretch at 1–19 (MKTFVLHIFIFALVAFASA) is a signal peptide. Cystine bridges form between C37-C77, C73-C129, and C118-C138.

This sequence belongs to the PBP/GOBP family. In terms of assembly, homodimer.

The protein localises to the secreted. In terms of biological role, colony queen number, a major feature of social organization, is associated with worker genotype for Gp-9. Colonies are headed by either a single reproductive queen (monogyne form) or multiple queens (polygyne form). Differences in worker Gp-9 genotypes between social forms may cause differences in workers' abilities to recognize queens and regulate their numbers. The chain is Pheromone-binding protein Gp-9 from Solenopsis pusillignis (Fire ant).